The chain runs to 358 residues: Trace amine-associated receptor 7b (358 aa).

The Extracellular segment spans residues 1–47; sequence MATDDDRFPWDQDSILSRDLLSASSMQLCYEKLNRSCVRSPYSPGPR. Asn34 carries N-linked (GlcNAc...) asparagine glycosylation. 2 cysteine pairs are disulfide-bonded: Cys37–Cys201 and Cys120–Cys205. A helical membrane pass occupies residues 48 to 68; it reads LILYAVFGFGAVLAVCGNLLV. Over 69–83 the chain is Cytoplasmic; the sequence is MTSILHFRQLHSPAN. A helical transmembrane segment spans residues 84 to 104; it reads FLVASLACADFLVGLTVMPFS. The Extracellular segment spans residues 105–125; that stretch reads MVRSVEGCWYFGDIYCKFHSS. A helical membrane pass occupies residues 126 to 147; it reads FDGSFCYSSIFHLCFISADRYI. Residues 148–166 are Cytoplasmic-facing; sequence AVSDPLIYPTRFTASVSGK. A helical membrane pass occupies residues 167–187; it reads CITFSWLLSIIYSFSLFYTGV. The Extracellular segment spans residues 188 to 211; that stretch reads NEAGLEDLVSALTCVGGCQIAVNQ. Asn210 carries N-linked (GlcNAc...) asparagine glycosylation. A helical transmembrane segment spans residues 212-232; sequence SWVFINFLLFLVPALVMMTVY. The Cytoplasmic segment spans residues 233-274; it reads SKIFLIAKQQAQNIEKMGKQTARASESYKDRVAKRERKAAKT. A helical transmembrane segment spans residues 275 to 295; the sequence is LGIAVAAFLLSWLPYFIDSII. Over 296 to 309 the chain is Extracellular; the sequence is DAFLGFVTPTYVYE. Residues 310–332 form a helical membrane-spanning segment; the sequence is ILVWIGYYNSAMNPLIYAFFYPW. Over 333-358 the chain is Cytoplasmic; it reads FRKAIKLIVTGKILRENSSATNLFPE.

It belongs to the G-protein coupled receptor 1 family.

Its subcellular location is the cell membrane. Its function is as follows. Olfactory receptor specific for N,N-dimethylalkylamines trace amines, such as N,N-dimethylcyclohexylamine. Trace amine compounds are enriched in animal body fluids and act on trace amine-associated receptors (TAARs) to elicit both intraspecific and interspecific innate behaviors. Ligand-binding causes a conformation change that triggers signaling via G(s)-class of G alpha proteins (GNAL or GNAS). The protein is Trace amine-associated receptor 7b of Rattus norvegicus (Rat).